We begin with the raw amino-acid sequence, 463 residues long: Interstitial collagenase B (463 aa).

The signal sequence occupies residues 1 to 17 (MPSLPLLLRLWAASSYS). Positions 18-96 (FPVIQDGLQK…PRCGVPDVAP (79 aa)) are cleaved as a propeptide — activation peptide. A Cysteine switch motif is present at residues 87–94 (PRCGVPDV). Cys89 contributes to the Zn(2+) binding site. The interval 95-273 (APYAITHNNP…PIQLTDATLD (179 aa)) is metalloprotease. A Ca(2+)-binding site is contributed by Asp155. 2 residues coordinate Zn(2+): His165 and Asp167. Ca(2+)-binding residues include Asp172 and Gly173. Zn(2+) is bound at residue His180. Ca(2+)-binding residues include Gly187 and Gly189. His193 contacts Zn(2+). Ca(2+) is bound at residue Asp195. His215 is a Zn(2+) binding site. Glu216 is a catalytic residue. Residues His219 and His225 each coordinate Zn(2+). The cysteines at positions 275 and 463 are disulfide-linked. Hemopexin repeat units follow at residues 278 to 321 (GLTF…WPNL) and 322 to 368 (PGKF…FGFP). Asp282 contributes to the Ca(2+) binding site. Residue Asn370 is glycosylated (N-linked (GlcNAc...) asparagine). Hemopexin repeat units follow at residues 371-419 (VTNI…FPGI) and 420-463 (DYKV…WFNC). Ca(2+) contacts are provided by Asp375 and Asp424.

This sequence belongs to the peptidase M10A family. It depends on Ca(2+) as a cofactor. Requires Zn(2+) as cofactor.

Its subcellular location is the secreted. The protein localises to the extracellular space. The protein resides in the extracellular matrix. The catalysed reaction is Cleavage of the triple helix of collagen at about three-quarters of the length of the molecule from the N-terminus, at 775-Gly-|-Ile-776 in the alpha1(I) chain. Cleaves synthetic substrates and alpha-macroglobulins at bonds where P1' is a hydrophobic residue.. Can be activated without removal of the activation peptide. This is Interstitial collagenase B (Mmp1b) from Mus musculus (Mouse).